Consider the following 314-residue polypeptide: Methionyl-tRNA formyltransferase (314 aa).

112–115 provides a ligand contact to (6S)-5,6,7,8-tetrahydrofolate; that stretch reads SLLP.

The protein belongs to the Fmt family.

It carries out the reaction L-methionyl-tRNA(fMet) + (6R)-10-formyltetrahydrofolate = N-formyl-L-methionyl-tRNA(fMet) + (6S)-5,6,7,8-tetrahydrofolate + H(+). Its function is as follows. Attaches a formyl group to the free amino group of methionyl-tRNA(fMet). The formyl group appears to play a dual role in the initiator identity of N-formylmethionyl-tRNA by promoting its recognition by IF2 and preventing the misappropriation of this tRNA by the elongation apparatus. The chain is Methionyl-tRNA formyltransferase from Legionella pneumophila (strain Paris).